Reading from the N-terminus, the 252-residue chain is Imidazole glycerol phosphate synthase subunit HisF (252 aa).

Catalysis depends on residues Asp11 and Asp130.

This sequence belongs to the HisA/HisF family. As to quaternary structure, heterodimer of HisH and HisF.

Its subcellular location is the cytoplasm. The catalysed reaction is 5-[(5-phospho-1-deoxy-D-ribulos-1-ylimino)methylamino]-1-(5-phospho-beta-D-ribosyl)imidazole-4-carboxamide + L-glutamine = D-erythro-1-(imidazol-4-yl)glycerol 3-phosphate + 5-amino-1-(5-phospho-beta-D-ribosyl)imidazole-4-carboxamide + L-glutamate + H(+). Its pathway is amino-acid biosynthesis; L-histidine biosynthesis; L-histidine from 5-phospho-alpha-D-ribose 1-diphosphate: step 5/9. In terms of biological role, IGPS catalyzes the conversion of PRFAR and glutamine to IGP, AICAR and glutamate. The HisF subunit catalyzes the cyclization activity that produces IGP and AICAR from PRFAR using the ammonia provided by the HisH subunit. This Persephonella marina (strain DSM 14350 / EX-H1) protein is Imidazole glycerol phosphate synthase subunit HisF.